Consider the following 357-residue polypeptide: Alanine racemase (357 aa).

The Proton acceptor; specific for D-alanine role is filled by Lys-35. N6-(pyridoxal phosphate)lysine is present on Lys-35. Residue Arg-130 coordinates substrate. Residue Tyr-255 is the Proton acceptor; specific for L-alanine of the active site. Residue Met-303 coordinates substrate.

This sequence belongs to the alanine racemase family. Pyridoxal 5'-phosphate is required as a cofactor.

It carries out the reaction L-alanine = D-alanine. It participates in amino-acid biosynthesis; D-alanine biosynthesis; D-alanine from L-alanine: step 1/1. In terms of biological role, catalyzes the interconversion of L-alanine and D-alanine. May also act on other amino acids. The protein is Alanine racemase (alr) of Nitrosospira multiformis (strain ATCC 25196 / NCIMB 11849 / C 71).